A 275-amino-acid chain; its full sequence is MALQQEIIQALGVKPSIDANAEIRRSIDFLKSYLKTNSFLKTLVLGISGGQDSTLAGKLCQQAISELRQETGDESLQFIAVRLPYGVQADEQDCQDAIAFIHPDRVLTVNIKGSVLASEQALREAGLELSDFVRGNEKARERMKAQYSIAGMTKGVVVGTDHAAEAVTGFFTKYGDGGTDINPLFRLNKRQGKQLLAALGCPEHLYLKAPTADLEDDRPSLPDEAALGVTYENIDDYLEGKTLDDTIARTIEGWYLKTEHKRRPPITVFDDFWKR.

46 to 53 (GISGGQDS) is an ATP binding site. Asp52 provides a ligand contact to Mg(2+). Position 140 (Arg140) interacts with deamido-NAD(+). Thr160 provides a ligand contact to ATP. Glu165 is a binding site for Mg(2+). Deamido-NAD(+)-binding residues include Lys173 and Asp180. Residues Lys189 and Thr211 each coordinate ATP. 260–261 (HK) is a binding site for deamido-NAD(+).

The protein belongs to the NAD synthetase family. As to quaternary structure, homodimer.

It carries out the reaction deamido-NAD(+) + NH4(+) + ATP = AMP + diphosphate + NAD(+) + H(+). It participates in cofactor biosynthesis; NAD(+) biosynthesis; NAD(+) from deamido-NAD(+) (ammonia route): step 1/1. Functionally, catalyzes the ATP-dependent amidation of deamido-NAD to form NAD. Uses ammonia as a nitrogen source. The protein is NH(3)-dependent NAD(+) synthetase of Enterobacter sp. (strain 638).